Consider the following 155-residue polypeptide: Ribosomal RNA large subunit methyltransferase H (155 aa).

Residues leucine 72, glycine 103, and 122 to 127 contribute to the S-adenosyl-L-methionine site; that span reads LSDLTL.

Belongs to the RNA methyltransferase RlmH family. In terms of assembly, homodimer.

Its subcellular location is the cytoplasm. It catalyses the reaction pseudouridine(1915) in 23S rRNA + S-adenosyl-L-methionine = N(3)-methylpseudouridine(1915) in 23S rRNA + S-adenosyl-L-homocysteine + H(+). In terms of biological role, specifically methylates the pseudouridine at position 1915 (m3Psi1915) in 23S rRNA. The chain is Ribosomal RNA large subunit methyltransferase H from Verminephrobacter eiseniae (strain EF01-2).